The chain runs to 384 residues: Alpha-2B adrenergic receptor (384 aa).

The helical transmembrane segment at 1–25 (AIAAVITFLILFTIFGNALVILAVL) threads the bilayer. Residues 26–36 (TSRSLRAPQNL) lie on the Cytoplasmic side of the membrane. Residues 37-62 (FLVSLAAADILVATLIIPFSLANELL) form a helical membrane-spanning segment. Topologically, residues 63-72 (GYWYFRRTWC) are extracellular. Cysteine 72 and cysteine 151 are disulfide-bonded. The helical transmembrane segment at 73–95 (EVYLALDVLFCTSSIVHLCAISL) threads the bilayer. The Cytoplasmic segment spans residues 96 to 117 (DRYWAVSRALQYNSKRTPRRIK). The helical transmembrane segment at 118 to 140 (CVILTVWLIAAAISLPPLIYKGD) threads the bilayer. The Extracellular segment spans residues 141-156 (QGPQPRGRPQCKLNQE). Residues 157–180 (AWYILSSSIGSFFAPCLIMILVYL) form a helical membrane-spanning segment. Residues 181 to 348 (RIYLIAKRSN…LTREKRFTFV (168 aa)) lie on the Cytoplasmic side of the membrane. Residues 192-289 (RGPRAKGAPR…PEEEEECGSP (98 aa)) form a disordered region. The segment covering 218 to 229 (LANSPTLASSLA) has biased composition (polar residues). A compositionally biased stretch (basic and acidic residues) spans 240 to 249 (PPGEKERETP). The chain crosses the membrane as a helical span at residues 349–372 (LAVVIGVFVLCWFPFFFSYSLGAI). Residues 373 to 381 (CPQHCKVPH) lie on the Extracellular side of the membrane. Residues 382-384 (GLF) traverse the membrane as a helical segment.

Belongs to the G-protein coupled receptor 1 family. Adrenergic receptor subfamily. ADRA2B sub-subfamily. In terms of assembly, interacts with RAB26. Interacts with PPP1R9B. Interacts with GGA1, GGA2 and GGA3.

It localises to the cell membrane. Functionally, alpha-2 adrenergic receptors mediate the catecholamine-induced inhibition of adenylate cyclase through the action of G proteins. The sequence is that of Alpha-2B adrenergic receptor (ADRA2B) from Elephas maximus (Indian elephant).